The primary structure comprises 1318 residues: MDIFSQRDYYPIPSDDVIKYKHMVHKKWNKNEVIQADIPSIIVHLSSPVDSVDYKGFSDFFLFYRNFLTPAELYDYLILRFKWCMREIESYQHQRSGDNQLRIGKVALIRTFVLLRHGILNHFADDFLLNENLRLRLISFFNEDIKSDMKVIVSCLISLKKAWLHAMKLNWDNVLFNEPAFSAYTDWIDYKIKDVSQLDMAQKRNSRFSYHGIQSISNPDMRNRSILSIYKSDNFDHMVQSNSNKISRNRTPSTLLFQKDSSNSEMATVYSNRKGAQKKTIALPNILTSELDRKDVMSNVTRMSHIIQDAKTLRSSDVNKIIPSTPAKKVELILNTIYSPDCLESENIQESLNQDTSSTQKSFPKGIMSLLARWKKNHKIADPKIRKPVGFTNKREAELDNFVKYVISISSLTNKEEDLKRLNENLDSKFDILSARTIDEVEYLFRLESKLLAQLSTMQKTTRTLSNDEFNDVNVPNNIDSKQISAMDNLDLFRTVNGVARSVISLTNSVNKLNNLSDHSVLDRRRVKSSMPNFYNRERSLSGLSNYAGLQFYDASSEMSAEDDKPQKLVFHDGVDELKNHLTQTFTKPGSISNSSPLKKVLPNLFEHPSVDSLASGDACSYVTYDSQLSQMGTVKKSMKDETSRYSNYEGPVLKKKVAYDNLREFTFEDSKEIIKNDTSSLIDILNSPVTPDLSILPQTPTGKGSVQHKKKEKSESIISPASGRISIAKSHHMSLSPNLTKLKEDDEYVKGDNSLGQAEDELIRLEKNLRDSKLENYNTVVAGNLGAGSGSSTPLGDSPTNVFELPSSINMVESDMDTESFESSFEQRQPTNLREQYFKSIGSPETASPRKVNSNNAYSQVSSQMSPSLANKYLFSPDNESLDIASPVKNVEDLKSRFLKGNNQSASSSQIGASINTSVTATPKNNDMFGSDFDKNGLKNIMTASEEKLSKDPVELAMMKLEGTFKKNKSGNNTGYSSDLEKEVDILNIANLPEMNANPSDKRKSLMLDRRRQTMFNIGPSIYPSNTNDEGYDEESITDDKIWSLIAQYHIDDENLLAKNHANHVPFILMYESKDVAQQFTLIEREILSEIDWKDLLDIKLLYKGPNLTSWLQLLIQNQEFTGIDLAVARFNLTVDWAISEIVLTTDLKMRRNTIERFIHVAEHCRKLQNFNTMMQIILALNSVVVQKFTEAWRLIEPGDMLLWEDLRKIPALDWNYHALRTMMKTVDPLKGCIPFIVVYLSDLTINSEKNTWIVEKRVVNYSKFSTCVQIVKNFIQKVQWSSFYDIIPIQELLSKCIYISSLSQDEIEHLTAEFAR.

In terms of domain architecture, N-terminal Ras-GEF spans 29-164 (NKNEVIQADI…CLISLKKAWL (136 aa)). Disordered regions lie at residues 694 to 718 (LSIL…SESI) and 842 to 861 (IGSP…AYSQ). A compositionally biased stretch (polar residues) spans 844–861 (SPETASPRKVNSNNAYSQ). Residues 1073–1314 (ESKDVAQQFT…SQDEIEHLTA (242 aa)) enclose the Ras-GEF domain.

This sequence belongs to the LTE1 family.

It is found in the cytoplasm. The protein resides in the bud. Functionally, GDP-GTP exchange factor component of the mitotic exit network (MEN). Fine-tunes the timing of the mitotic exit and couples this event with cytokinesis. May also be involved in proprotein-processing in the secretory pathway. The polypeptide is Guanine nucleotide exchange factor LTE1 (LTE1) (Candida glabrata (strain ATCC 2001 / BCRC 20586 / JCM 3761 / NBRC 0622 / NRRL Y-65 / CBS 138) (Yeast)).